Reading from the N-terminus, the 412-residue chain is CinA-like protein (412 aa).

The protein belongs to the CinA family.

The chain is CinA-like protein from Salinibacter ruber (strain DSM 13855 / M31).